Reading from the N-terminus, the 464-residue chain is Adenosylhomocysteinase (464 aa).

Residues Thr56, Asp131, and Glu190 each contribute to the substrate site. NAD(+) is bound at residue 191 to 193; sequence TTT. Substrate contacts are provided by Lys220 and Asp224. Residues Asn225, 254–259, Glu277, Asn312, 333–335, and Asn378 each bind NAD(+); these read GFGDVG and IGH.

The protein belongs to the adenosylhomocysteinase family. NAD(+) is required as a cofactor.

The protein resides in the cytoplasm. The enzyme catalyses S-adenosyl-L-homocysteine + H2O = L-homocysteine + adenosine. It participates in amino-acid biosynthesis; L-homocysteine biosynthesis; L-homocysteine from S-adenosyl-L-homocysteine: step 1/1. In terms of biological role, may play a key role in the regulation of the intracellular concentration of adenosylhomocysteine. In Zymomonas mobilis subsp. mobilis (strain ATCC 31821 / ZM4 / CP4), this protein is Adenosylhomocysteinase.